The following is a 204-amino-acid chain: Nascent polypeptide-associated complex subunit alpha (204 aa).

A compositionally biased stretch (basic and acidic residues) spans Met-1–Val-19. Disordered stretches follow at residues Met-1 to Arg-47 and Gln-118 to Ala-167. A compositionally biased stretch (acidic residues) spans Ala-22–Glu-32. The 66-residue stretch at Ser-46–Ala-111 folds into the NAC-A/B domain. The segment covering Gln-118–Glu-128 has biased composition (low complexity). Basic and acidic residues predominate over residues His-129–Glu-151. A compositionally biased stretch (acidic residues) spans Glu-152 to Gly-164. The UBA domain maps to Leu-165 to Ile-204.

It belongs to the NAC-alpha family. Part of the nascent polypeptide-associated complex (NAC), consisting of egd2 and egd1. NAC associates with ribosomes via egd1.

It is found in the cytoplasm. The protein resides in the nucleus. In terms of biological role, component of the nascent polypeptide-associated complex (NAC), a dynamic component of the ribosomal exit tunnel, protecting the emerging polypeptides from interaction with other cytoplasmic proteins to ensure appropriate nascent protein targeting. The NAC complex also promotes mitochondrial protein import by enhancing productive ribosome interactions with the outer mitochondrial membrane and blocks the inappropriate interaction of ribosomes translating non-secretory nascent polypeptides with translocation sites in the membrane of the endoplasmic reticulum. Egd2 may also be involved in transcription regulation. The polypeptide is Nascent polypeptide-associated complex subunit alpha (egd2) (Aspergillus fumigatus (strain ATCC MYA-4609 / CBS 101355 / FGSC A1100 / Af293) (Neosartorya fumigata)).